We begin with the raw amino-acid sequence, 532 residues long: UDP-glucuronosyltransferase 1A4 (532 aa).

Positions 1–27 (MVLGVWITLWRLVRLLLLLCVLPWAEG) are cleaved as a signal peptide. 2 N-linked (GlcNAc...) asparagine glycosylation sites follow: N141 and N295. The helical transmembrane segment at 490–506 (VIGFLLAIVLTVAFVTF) threads the bilayer.

Belongs to the UDP-glycosyltransferase family. In terms of assembly, homodimers. Homooligomer. Interacts with UGT1A1, UGT1A3, UGT1A6, UGT1A7, UGT1A8, UGT1A9 and UGT1A10 to form heterodimers.

Its subcellular location is the endoplasmic reticulum membrane. It catalyses the reaction glucuronate acceptor + UDP-alpha-D-glucuronate = acceptor beta-D-glucuronoside + UDP + H(+). It carries out the reaction calcidiol + UDP-alpha-D-glucuronate = calcidiol 25-O-(beta-D-glucuronide) + UDP + H(+). The catalysed reaction is calcidiol + UDP-alpha-D-glucuronate = calcidiol 3-O-(beta-D-glucuronide) + UDP + H(+). The enzyme catalyses calcitriol + UDP-alpha-D-glucuronate = calcitriol 25-O-(beta-D-glucuronide) + UDP + H(+). It catalyses the reaction (5Z,8Z,11Z,14Z)-eicosatetraenoate + UDP-alpha-D-glucuronate = O-[(5Z),(8Z),(11Z),(14Z)-eicosatetraenoyl]-beta-D-glucuronate + UDP. It carries out the reaction 15-hydroxy-(5Z,8Z,11Z,13E)-eicosatetraenoate + UDP-alpha-D-glucuronate = 15-O-(beta-D-glucuronosyl)-(5Z,8Z,11Z,14Z)-eicosatetraenoate + UDP + H(+). The catalysed reaction is 20-hydroxy-(5Z,8Z,11Z,14Z)-eicosatetraenoate + UDP-alpha-D-glucuronate = 20-O-(beta-D-glucuronosyl)-(5Z,8Z,11Z,14Z)-eicosatetraenoate + UDP + H(+). In terms of biological role, UDP-glucuronosyltransferase (UGT) that catalyzes phase II biotransformation reactions in which lipophilic substrates are conjugated with glucuronic acid to increase the metabolite's water solubility, thereby facilitating excretion into either the urine or bile. Essential for the elimination and detoxification of drugs, xenobiotics and endogenous compounds. Involved in the glucuronidation of calcidiol, which is the major circulating form of vitamin D3 essential for the regulation of calcium and phosphate homeostasis. Also glucuronidates the biologically active form of vitamin D3, calcitriol, probably leading to its biliary transport and intestinal reabsorption. Involved in the glucuronidation of arachidonic acid (AA) and AA-derived eicosanoids including 15-HETE, 20-HETE and PGB1. This is UDP-glucuronosyltransferase 1A4 (Ugt1a4) from Oryctolagus cuniculus (Rabbit).